Reading from the N-terminus, the 238-residue chain is Dolichyldiphosphatase 1 (238 aa).

4 helical membrane-spanning segments follow: residues 33 to 53 (LAYLSLGPVFVIVGFVTLIIF), 100 to 120 (PSSHSQFMWFFSVYSFLFLYL), 130 to 150 (FLDLLWRHVLSLGLLAAAFLV), and 162 to 182 (WSQVLYGGIAGGLMAVAWFIF).

The protein belongs to the dolichyldiphosphatase family.

It localises to the endoplasmic reticulum membrane. It catalyses the reaction a di-trans,poly-cis-dolichyl diphosphate + H2O = a di-trans,poly-cis-dolichyl phosphate + phosphate + H(+). It participates in protein modification; protein glycosylation. Its function is as follows. Required for efficient N-glycosylation. Necessary for maintaining optimal levels of dolichol-linked oligosaccharides. Hydrolyzes dolichyl pyrophosphate at a very high rate and dolichyl monophosphate at a much lower rate. Does not act on phosphatidate. In Plecturocebus moloch (Dusky titi monkey), this protein is Dolichyldiphosphatase 1 (DOLPP1).